A 511-amino-acid chain; its full sequence is Bifunctional purine biosynthesis protein PurH (511 aa).

The MGS-like domain maps to 1-147 (MIQIKRALIS…KNYKHTLVLT (147 aa)).

This sequence belongs to the PurH family.

The catalysed reaction is (6R)-10-formyltetrahydrofolate + 5-amino-1-(5-phospho-beta-D-ribosyl)imidazole-4-carboxamide = 5-formamido-1-(5-phospho-D-ribosyl)imidazole-4-carboxamide + (6S)-5,6,7,8-tetrahydrofolate. It carries out the reaction IMP + H2O = 5-formamido-1-(5-phospho-D-ribosyl)imidazole-4-carboxamide. It functions in the pathway purine metabolism; IMP biosynthesis via de novo pathway; 5-formamido-1-(5-phospho-D-ribosyl)imidazole-4-carboxamide from 5-amino-1-(5-phospho-D-ribosyl)imidazole-4-carboxamide (10-formyl THF route): step 1/1. Its pathway is purine metabolism; IMP biosynthesis via de novo pathway; IMP from 5-formamido-1-(5-phospho-D-ribosyl)imidazole-4-carboxamide: step 1/1. The chain is Bifunctional purine biosynthesis protein PurH from Leptospira borgpetersenii serovar Hardjo-bovis (strain JB197).